Here is a 372-residue protein sequence, read N- to C-terminus: Alanine dehydrogenase 1 (372 aa).

Residue His-94 is part of the active site. 170–200 (TYVIFGGGVAATNAANVALGLNAKVIIIELN) contacts NAD(+).

This sequence belongs to the AlaDH/PNT family.

The catalysed reaction is L-alanine + NAD(+) + H2O = pyruvate + NH4(+) + NADH + H(+). The protein operates within amino-acid degradation; L-alanine degradation via dehydrogenase pathway; NH(3) and pyruvate from L-alanine: step 1/1. In terms of biological role, may play a role in cell wall synthesis as L-alanine is an important constituent of the peptidoglycan layer. The polypeptide is Alanine dehydrogenase 1 (ald1) (Staphylococcus aureus (strain USA300)).